The sequence spans 232 residues: uncharacterized protein (232 aa).

This is an uncharacterized protein from Escherichia coli (strain K12).